We begin with the raw amino-acid sequence, 195 residues long: Protein hunchback (195 aa).

Disordered stretches follow at residues 16-57 (SHHH…SHTN), 64-83 (LKQQQQQQQQHQHQQQQQPM), and 155-195 (LTPP…KYMA). The segment covering 17–29 (HHHHHHHAHHSHH) has biased composition (basic residues). Composition is skewed to low complexity over residues 33-44 (SNSNSNASSPHQ) and 66-81 (QQQQQQQQHQHQQQQQ). A compositionally biased stretch (basic and acidic residues) spans 176–195 (EPEKEHDLMSNSSEDMKYMA).

The protein belongs to the hunchback C2H2-type zinc-finger protein family.

Its subcellular location is the nucleus. Its function is as follows. Gap class segmentation protein that controls development of head structures. This is Protein hunchback (hb) from Drosophila dasycnemia (Fruit fly).